A 1992-amino-acid chain; its full sequence is E3 ubiquitin-protein ligase TRIP12 (1992 aa).

Positions 1–10 (MSNRPNNNPG) are enriched in polar residues. Disordered stretches follow at residues 1–398 (MSNR…DDSE), 797–817 (QRKPNPLANSNTSGYSESKKD), and 938–1080 (SLLT…ASKD). At Ser-2 the chain carries N-acetylserine. Position 12 is a phosphoserine (Ser-12). Residues 18–27 (RNTAGAQPQD) show a composition bias toward polar residues. The span at 48–70 (DPDRANTSERQKTGQVPKKDNSR) shows a compositional bias: basic and acidic residues. Ser-77, Ser-85, and Ser-100 each carry phosphoserine. The segment covering 78 to 88 (PDYNRTNSPSS) has biased composition (polar residues). A compositionally biased stretch (polar residues) spans 119–132 (EQQLKSAQSPSTSK). Composition is skewed to low complexity over residues 154–166 (SSCVKSGSGSEST) and 175–216 (PTKL…SSTV). Lys-181 bears the N6-acetyllysine mark. Residues 280–290 (PGSSKSETSKP) are compositionally biased toward polar residues. Ser-310 and Ser-312 each carry phosphoserine. Polar residues predominate over residues 326 to 338 (QKTTGSCASTSRR). The segment covering 346–358 (GAAEARRQEKMAD) has biased composition (basic and acidic residues). Polar residues-rich tracts occupy residues 360-371 (ESNQEAVNSSAA) and 803-812 (LANSNTSGYS). A WWE domain is found at 749-836 (MLKKGNAQNT…DPELAKSFIK (88 aa)). Ser-942 is modified (phosphoserine). Positions 948–973 (TNGSGSMGSTTSVSSGTATAATHAAA) are enriched in low complexity. A phosphoserine mark is found at Ser-991 and Ser-997. The span at 1001–1014 (KRKRLPKRGPRRPK) shows a compositional bias: basic residues. Ser-1016 is modified (phosphoserine). Residues 1017–1026 (PPRDDDKVDN) are compositionally biased toward basic and acidic residues. A compositionally biased stretch (low complexity) spans 1029 to 1040 (KSPTTTQSPKSS). Phosphoserine is present on Ser-1030. The span at 1041-1062 (FLASLNPKTWGRLSTQSNSNNI) shows a compositional bias: polar residues. Phosphoserine occurs at positions 1317, 1322, 1329, and 1376. Thr-1377 is subject to Phosphothreonine. Disordered regions lie at residues 1407 to 1433 (SNKDCVGGKRGRAQTAPTKTSPRNAKK) and 1568 to 1587 (TNPEINQSDSQDSRVAPRLD). Position 1425 is an N6-acetyllysine (Lys-1425). Ser-1427 carries the post-translational modification Phosphoserine. Positions 1496–1570 (EIIPTSEFIN…AMQRLLDTNP (75 aa)) are K-box. In terms of domain architecture, HECT spans 1885–1992 (PDHGYTHDSR…REGQQSFHLS (108 aa)). Cys-1959 acts as the Glycyl thioester intermediate in catalysis.

This sequence belongs to the UPL family. K-HECT subfamily. Interacts with MYC; leading to disrupt interaction with isoform p19ARF/ARF of CDKN2A. Interacts with TRADD; leading to disrupt interaction with isoform p19ARF/ARF of CDKN2A. Interacts with SMARCC1; leading to disrupt interaction with SMARCE1.

It localises to the nucleus. It is found in the nucleoplasm. The enzyme catalyses S-ubiquitinyl-[E2 ubiquitin-conjugating enzyme]-L-cysteine + [acceptor protein]-L-lysine = [E2 ubiquitin-conjugating enzyme]-L-cysteine + N(6)-ubiquitinyl-[acceptor protein]-L-lysine.. It participates in protein modification; protein ubiquitination. Functionally, E3 ubiquitin-protein ligase involved in ubiquitin fusion degradation (UFD) pathway and regulation of DNA repair. Part of the ubiquitin fusion degradation (UFD) pathway, a process that mediates ubiquitination of protein at their N-terminus, regardless of the presence of lysine residues in target proteins. Acts as a key regulator of DNA damage response by acting as a suppressor of RNF168, an E3 ubiquitin-protein ligase that promotes accumulation of 'Lys-63'-linked histone H2A and H2AX at DNA damage sites, thereby acting as a guard against excessive spreading of ubiquitinated chromatin at damaged chromosomes. In normal cells, mediates ubiquitination and degradation of isoform p19ARF/ARF of CDKN2A, a lysine-less tumor suppressor required for p53/TP53 activation under oncogenic stress. In cancer cells, however, isoform p19ARF/ARF and TRIP12 are located in different cell compartments, preventing isoform p19ARF/ARF ubiquitination and degradation. Does not mediate ubiquitination of isoform p16-INK4a of CDKN2A. Also catalyzes ubiquitination of NAE1 and SMARCE1, leading to their degradation. Ubiquitination and degradation of target proteins is regulated by interaction with proteins such as MYC, TRADD or SMARCC1, which disrupt the interaction between TRIP12 and target proteins. Mediates ubiquitination of ASXL1: following binding to N(6)-methyladenosine methylated DNA, ASXL1 is ubiquitinated by TRIP12, leading to its degradation and subsequent inactivation of the PR-DUB complex. The chain is E3 ubiquitin-protein ligase TRIP12 (TRIP12) from Homo sapiens (Human).